Here is a 598-residue protein sequence, read N- to C-terminus: Arginine--tRNA ligase (598 aa).

The short motif at 131 to 141 is the 'HIGH' region element; sequence ANPTGPMHVGH. Residues 288–308 are disordered; that stretch reads KLPPPKSKKGQPPAQPQPDEE.

Belongs to the class-I aminoacyl-tRNA synthetase family. Monomer.

The protein localises to the cytoplasm. It catalyses the reaction tRNA(Arg) + L-arginine + ATP = L-arginyl-tRNA(Arg) + AMP + diphosphate. The chain is Arginine--tRNA ligase from Anaeromyxobacter sp. (strain K).